The sequence spans 102 residues: MSDQEAKPSSEDLGDKKEGGDYIKLKVIGQDSSEIHFKVKMTTHLKKLKESYCQRQGVPMNSLRFLFEGQRISDHQTPKELGMEEEDVIEVYQEQTGGHSTI.

The region spanning 21-98 (DYIKLKVIGQ…IEVYQEQTGG (78 aa)) is the Ubiquitin-like domain. Gly98 is covalently cross-linked (Glycyl lysine isopeptide (Gly-Lys) (interchain with K-? in acceptor proteins)). Positions 99 to 102 (HSTI) are excised as a propeptide.

The protein belongs to the ubiquitin family. SUMO subfamily. In terms of assembly, interacts with sae2, ube2i, ranbp2, pias1 and pias2. Interacts with sox9 and sox10. Covalently attached to a number of proteins. In terms of processing, cleavage of precursor form by a sentrin-specific protease is necessary for function.

Its subcellular location is the nucleus membrane. It is found in the nucleus speckle. The protein localises to the cytoplasm. The protein resides in the nucleus. It localises to the PML body. Its subcellular location is the cell membrane. Functionally, ubiquitin-like protein that can be covalently attached to proteins as a monomer or a lysine-linked polymer. Covalent attachment via an isopeptide bond to its substrates requires prior activation by the E1 complex sae1-sae2 and linkage to the E2 enzyme ube2i. This post-translational modification on lysine residues of proteins plays a crucial role in a number of cellular processes such as nuclear transport, DNA replication and repair, mitosis and signal transduction. Polymeric sumo1 chains are also susceptible to polyubiquitination which functions as a signal for proteasomal degradation of modified proteins. The sequence is that of Small ubiquitin-related modifier 1 (sumo1) from Xenopus tropicalis (Western clawed frog).